The sequence spans 478 residues: Ribulose bisphosphate carboxylase large chain (478 aa).

Residues 1-2 (MS) constitute a propeptide that is removed on maturation. P3 is subject to N-acetylproline. Residue K14 is modified to N6,N6,N6-trimethyllysine. Positions 123 and 173 each coordinate substrate. The active-site Proton acceptor is K175. Substrate is bound at residue K177. Mg(2+) is bound by residues K201, D203, and E204. At K201 the chain carries N6-carboxylysine. H294 serves as the catalytic Proton acceptor. Substrate-binding residues include R295, H327, and S379.

The protein belongs to the RuBisCO large chain family. Type I subfamily. In terms of assembly, heterohexadecamer of 8 large chains and 8 small chains; disulfide-linked. The disulfide link is formed within the large subunit homodimers. Requires Mg(2+) as cofactor. The disulfide bond which can form in the large chain dimeric partners within the hexadecamer appears to be associated with oxidative stress and protein turnover.

It localises to the plastid. The protein resides in the chloroplast. It catalyses the reaction 2 (2R)-3-phosphoglycerate + 2 H(+) = D-ribulose 1,5-bisphosphate + CO2 + H2O. It carries out the reaction D-ribulose 1,5-bisphosphate + O2 = 2-phosphoglycolate + (2R)-3-phosphoglycerate + 2 H(+). In terms of biological role, ruBisCO catalyzes two reactions: the carboxylation of D-ribulose 1,5-bisphosphate, the primary event in carbon dioxide fixation, as well as the oxidative fragmentation of the pentose substrate in the photorespiration process. Both reactions occur simultaneously and in competition at the same active site. This is Ribulose bisphosphate carboxylase large chain from Neurachne tenuifolia.